A 96-amino-acid chain; its full sequence is MNKDAQMRATINQKLIETGERERLKELLRAKLIECGWKDQLKAHCKDVIKEKGLEHVTVDDLVAEITPKGRALVPDSVKKELLQRIRTFLAQHASL.

The protein belongs to the ENY2 family. In terms of assembly, component of the nuclear pore complex (NPC)-associated TREX-2 complex (transcription and export complex 2). Component of the SAGA transcription coactivator-HAT complex. Within the SAGA complex, participates in a subcomplex of SAGA called the DUB module (deubiquitination module).

The protein localises to the nucleus. The protein resides in the nucleoplasm. Involved in mRNA export coupled transcription activation by association with both the TREX-2 and the SAGA complexes. The transcription regulatory histone acetylation (HAT) complex SAGA is a multiprotein complex that activates transcription by remodeling chromatin and mediating histone acetylation and deubiquitination. Within the SAGA complex, participates in a subcomplex that specifically deubiquitinates histones. The SAGA complex is recruited to specific gene promoters by activators, where it is required for transcription. The TREX-2 complex functions in docking export-competent ribonucleoprotein particles (mRNPs) to the nuclear entrance of the nuclear pore complex (nuclear basket). TREX-2 participates in mRNA export and accurate chromatin positioning in the nucleus by tethering genes to the nuclear periphery. This chain is Transcription and mRNA export factor ENY2, found in Taeniopygia guttata (Zebra finch).